An 85-amino-acid chain; its full sequence is MKVTLIAILTCAAVLVLHTTAAEELEAESQLMEVGMPDTELAAVDEERLVECSVSCEIEKEGNKDCKKKKCKGGWKCKFNMCVKV.

Positions 1–22 (MKVTLIAILTCAAVLVLHTTAA) are cleaved as a signal peptide. The propeptide occupies 23 to 48 (EELEAESQLMEVGMPDTELAAVDEER). 3 disulfides stabilise this stretch: Cys52–Cys66, Cys56–Cys77, and Cys71–Cys82.

This sequence belongs to the neurotoxin 12 (Hwtx-2) family. 02 (Hwtx-2) subfamily. As to expression, expressed by the venom gland.

Its subcellular location is the secreted. Functionally, postsynaptic neurotoxin. This is U4-theraphotoxin-Hhn1d from Cyriopagopus hainanus (Chinese bird spider).